The chain runs to 369 residues: tRNA/tmRNA (uracil-C(5))-methyltransferase (369 aa).

S-adenosyl-L-methionine contacts are provided by Gln190, Tyr218, Asn223, Glu239, and Asp301. Catalysis depends on Cys326, which acts as the Nucleophile. Glu360 (proton acceptor) is an active-site residue.

The protein belongs to the class I-like SAM-binding methyltransferase superfamily. RNA M5U methyltransferase family. TrmA subfamily.

It carries out the reaction uridine(54) in tRNA + S-adenosyl-L-methionine = 5-methyluridine(54) in tRNA + S-adenosyl-L-homocysteine + H(+). The enzyme catalyses uridine(341) in tmRNA + S-adenosyl-L-methionine = 5-methyluridine(341) in tmRNA + S-adenosyl-L-homocysteine + H(+). Its function is as follows. Dual-specificity methyltransferase that catalyzes the formation of 5-methyluridine at position 54 (m5U54) in all tRNAs, and that of position 341 (m5U341) in tmRNA (transfer-mRNA). This is tRNA/tmRNA (uracil-C(5))-methyltransferase from Vibrio cholerae serotype O1 (strain ATCC 39541 / Classical Ogawa 395 / O395).